The sequence spans 130 residues: METNRQKKIGGVIQKDLVDILQGEIRKNGISNLVISVSKVSVTTDLGVARVYLSVFPQEKAPEILESIKSNMYLIKHDLSQRVRLQLRKVPNLAFYIDDSLDYIEKIDNALAGKENPIENRDLLEKRKKI.

The protein belongs to the RbfA family. Monomer. Binds 30S ribosomal subunits, but not 50S ribosomal subunits or 70S ribosomes.

The protein resides in the cytoplasm. One of several proteins that assist in the late maturation steps of the functional core of the 30S ribosomal subunit. Associates with free 30S ribosomal subunits (but not with 30S subunits that are part of 70S ribosomes or polysomes). Required for efficient processing of 16S rRNA. May interact with the 5'-terminal helix region of 16S rRNA. This is Ribosome-binding factor A from Flavobacterium psychrophilum (strain ATCC 49511 / DSM 21280 / CIP 103535 / JIP02/86).